We begin with the raw amino-acid sequence, 224 residues long: Type VII secretion system protein EsaE (224 aa).

In terms of assembly, interacts with EssD.

Component of the type VII secretion system (Ess). Plays a role in Esx protein secretion. Plays an essential role in the processing and secretion of EssD. The polypeptide is Type VII secretion system protein EsaE (Staphylococcus aureus (strain USA300)).